A 66-amino-acid polypeptide reads, in one-letter code: Large ribosomal subunit protein bL35 (66 aa).

The span at Met-1–His-26 shows a compositional bias: basic residues. The disordered stretch occupies residues Met-1–Ala-48.

The protein belongs to the bacterial ribosomal protein bL35 family. In terms of assembly, part of the 50S ribosomal subunit.

This Bacillus subtilis (strain 168) protein is Large ribosomal subunit protein bL35.